A 639-amino-acid polypeptide reads, in one-letter code: E3 ubiquitin-protein ligase RNF12 (639 aa).

3 disordered regions span residues 1 to 28 (MESADSAGKGSTEQSESQRQSQMDRLDR), 67 to 403 (RLQQ…ESER), and 467 to 534 (NDTD…GGVT). Residues 11 to 21 (STEQSESQRQS) show a composition bias toward low complexity. 2 stretches are compositionally biased toward polar residues: residues 110 to 138 (SVRQTGNTTRSGQRGNQSWRAVSRTNPNS) and 147 to 166 (INVNRTSGNPSMPSLEQSSE). Positions 213-228 (RSPDQRRTRARTDRSR) are enriched in basic and acidic residues. The segment covering 244–253 (HSSSQTVDAS) has biased composition (polar residues). Residues 269–286 (SSQMQNSSSSNETEGSSR) are compositionally biased toward low complexity. Residues 290-302 (HITARQQALGTEG) are compositionally biased toward polar residues. Low complexity-rich tracts occupy residues 303–327 (QSQSQTQTQSQSQTQTQSQTQSQST) and 335–348 (SRSSSQPPQTDSSS). Positions 349-358 (NAETTGTGQR) are enriched in polar residues. Basic and acidic residues predominate over residues 372–382 (RPGDYRQRDSI). Residues 383–399 (ANRTRSRSQTPNNTVTY) are compositionally biased toward polar residues. 2 stretches are compositionally biased toward pro residues: residues 473-482 (NPTPVSPPAA) and 493-506 (PEPPAPIVEPPEPV). Residues 585 to 626 (CSVCITEYTEGNKLRKLPCSHEYHVHCIDRWLSENSTCPICR) form an RING-type; atypical zinc finger. A PDZ-binding motif is present at residues 636–639 (ESIV).

The protein belongs to the RNF12 family. In terms of assembly, forms homodimers through the C-terminal region. The N-terminus interacts with the homeobox of LIM/homeobox factor lhx1/lim1, with lhx3/lim3 and lhx5/lim5, and with the N-terminus of ldb1.

It localises to the nucleus. The catalysed reaction is S-ubiquitinyl-[E2 ubiquitin-conjugating enzyme]-L-cysteine + [acceptor protein]-L-lysine = [E2 ubiquitin-conjugating enzyme]-L-cysteine + N(6)-ubiquitinyl-[acceptor protein]-L-lysine.. Its pathway is protein modification; protein ubiquitination. Functionally, acts as an E3 ubiquitin-protein ligase specific for ldb1, mediating ubiquitination and proteasome-dependent degradation of excess ldb1 in a RING-dependent manner. Does not degrade ldb1 bound to lhx1/lim1, nor lim1 itself and thus contributes to the establishment of proper ldb1-lhx1/lim1 stoichiometry and the formation of a ldb1-lhx1/lim1 complex. Interferes with Spemann organizer function and suppresses secondary axis formation induced by ldb1 and lhx1/lim1. This chain is E3 ubiquitin-protein ligase RNF12, found in Xenopus tropicalis (Western clawed frog).